The sequence spans 1480 residues: MQRSPLEKASVVSKLFFSWTRPILKKGYRQRLELSDIYQIPSADSADNLSEKLEREWDRELASKKNPKLINALRRCFFWRFMFYGILLYLGEVTKAVQPLLLGRIIASYDPDNKTERSIAIYLGIGLCLLFIVRTLLLHPAIFGLHHIGMQMRIAMFSLIYKKTLKLSSRVLDKISIGQLVSLLSNNLNKFDEGLALAHFVWIAPLQVALLMGLIWELLQASVFCGLGFLIVLALFQAGLGRMMMKYRDQRAGKINERLVITSEMIENIQSVKAYCWEEAMEKMIENLRQTELKLTRKAAYVRYFNSSAFFFSGFFVVFLSVLPYALIKGIILRKIFTTISFCIVLRMAVTRQFPWAVQTWYDSLGAINKIQDFLQKQEYKTLEYNLTTTEVVMENVTAFWEEGFGELFEKAKQSNNNRKTSNGHDNLFFSNFSLLGTPVLKDINFKIERGQLLAVAGSTGAGKTSLLMMIMGELEPSEGKIKHSGRISFCSQFSWIMPGTIKENIIFGVSYDEYRYRSVIKACQLEEDISKFAEKDNIVLGEGGITLSGGQRARISLARAVYKDADLYLLDSPFGYLDVLTEKEIFESCVCKLMANKTRILVTSKMEHLKKADKILILHEGSSYFYGTFSELQNLRPDFSSKLMGYDSFDQFSSERRNSILTETLRRFSLEGDAPVSWTETKKQSFKQTGEFGEKRKNSILNSINSIRKFSIVHKTPLQMNGIEEDSDEPSERRLSLIPDSEQGEAILPRISVINTGPALQVRRRQSVLNMMTHSVNQGQSVHRKTTASTRKVSLAPQANLTELDIYSRRLSQETGLEISEEINEEDLKECFFDDMESIPAVTTWNTYLRYITLHKSLIFVLIWCLVIFLAEVAASLVVLWLLGNTSFQDKGNSTYSRNNSYAVIITNTSSYYVFYIYVGVADTLLALGFFRGLPLVHTLITVSKILHHKMLHSVLQAPMSTLNTLKAGGILNRFSKDIAILDDLLPLTIFDFIQLLLIVIGAIAVVSVLQPYIFLATVPVIAAFILLRAYFLQTSQQLKQLESAGRSPIFTHLVTSLKGLWTLRAFGRQPYFETLFHKALNLHTANWFLYLSTLRWFQMRIEMIFVIFFIAVTFISILTTGEGEGTVGIILTLAMNIMSTLQWAVNSSIDVDSLMRSVSRVFKFIDMPTEGKPTKSTKAYKNGQLSKVMIIENSHVKKDDIWPSGGQMTIKDLTAKYIEGGNAILENISFSISPGQRVGLLGRTGSGKSTLLSAFLRLLNTEGEIQIDGVSWDSVTLQQWRKAFGVIPQKVFIFTGTFRKNLDPYEQWSDQEVWKVADEVGLRSVIEQFPGKLDFVLVDGGCVLSHGHKQLMCLARSVLSKAKILLLDEPSAHLDPVTYQIIRRALKQAFADCTVILCEHRIEAMLECQQFLVIEENKVRQYDSIQKLLNEKSLFQQAISHSDRVKLFPHRNSSKYKSRPQIASLKEETEEEVQETRL.

Over 1–77 (MQRSPLEKAS…KLINALRRCF (77 aa)) the chain is Cytoplasmic. Residues 78-98 (FWRFMFYGILLYLGEVTKAVQ) form a helical membrane-spanning segment. Residues 81-365 (FMFYGILLYL…WAVQTWYDSL (285 aa)) form the ABC transmembrane type-1 1 domain. Topologically, residues 99–122 (PLLLGRIIASYDPDNKTERSIAIY) are extracellular. A helical transmembrane segment spans residues 123 to 146 (LGIGLCLLFIVRTLLLHPAIFGLH). Residues 147-195 (HIGMQMRIAMFSLIYKKTLKLSSRVLDKISIGQLVSLLSNNLNKFDEGL) lie on the Cytoplasmic side of the membrane. The chain crosses the membrane as a helical span at residues 196–216 (ALAHFVWIAPLQVALLMGLIW). Topologically, residues 217 to 222 (ELLQAS) are extracellular. A helical membrane pass occupies residues 223 to 243 (VFCGLGFLIVLALFQAGLGRM). Topologically, residues 244–298 (MMKYRDQRAGKINERLVITSEMIENIQSVKAYCWEEAMEKMIENLRQTELKLTRK) are cytoplasmic. The chain crosses the membrane as a helical span at residues 299 to 319 (AAYVRYFNSSAFFFSGFFVVF). Topologically, residues 320-339 (LSVLPYALIKGIILRKIFTT) are extracellular. Residues 340–358 (ISFCIVLRMAVTRQFPWAV) form a helical membrane-spanning segment. At 359–858 (QTWYDSLGAI…YLRYITLHKS (500 aa)) the chain is on the cytoplasmic side. ATP is bound by residues tryptophan 401, serine 434, 458 to 465 (GSTGAGKT), and glutamine 493. Residues 423-646 (NGHDNLFFSN…RPDFSSKLMG (224 aa)) enclose the ABC transporter 1 domain. A lipid anchor (S-palmitoyl cysteine) is attached at cysteine 524. A phosphoserine mark is found at serine 549 and serine 660. Residues 654–831 (SSERRNSILT…EEINEEDLKE (178 aa)) are disordered R region. Residue serine 670 is modified to Phosphoserine; by PKA. Position 686 is a phosphoserine (serine 686). Lysine 688 is covalently cross-linked (Glycyl lysine isopeptide (Lys-Gly) (interchain with G-Cter in ubiquitin)). A phosphoserine mark is found at serine 700 and serine 712. Residue threonine 717 is modified to Phosphothreonine. A phosphoserine mark is found at serine 737, serine 753, serine 768, serine 790, serine 795, and serine 813. Residues 859 to 879 (LIFVLIWCLVIFLAEVAASLV) traverse the membrane as a helical segment. An ABC transmembrane type-1 2 domain is found at 859–1155 (LIFVLIWCLV…AVNSSIDVDS (297 aa)). The Extracellular segment spans residues 880-918 (VLWLLGNTSFQDKGNSTYSRNNSYAVIITNTSSYYVFYI). N-linked (GlcNAc...) asparagine glycosylation is found at asparagine 894, asparagine 900, and asparagine 909. A discontinuously helical transmembrane segment spans residues 919-939 (YVGVADTLLALGFFRGLPLVH). The Cytoplasmic portion of the chain corresponds to 940 to 990 (TLITVSKILHHKMLHSVLQAPMSTLNTLKAGGILNRFSKDIAILDDLLPLT). The chain crosses the membrane as a helical span at residues 991–1011 (IFDFIQLLLIVIGAIAVVSVL). Residues 1012-1013 (QP) are Extracellular-facing. The helical transmembrane segment at 1014–1034 (YIFLATVPVIAAFILLRAYFL) threads the bilayer. Residues 1035–1095 (QTSQQLKQLE…TANWFLYLST (61 aa)) are Cytoplasmic-facing. Residues 1096 to 1116 (LRWFQMRIEMIFVIFFIAVTF) traverse the membrane as a helical segment. The Extracellular portion of the chain corresponds to 1117 to 1130 (ISILTTGEGEGTVG). Residues 1131–1151 (IILTLAMNIMSTLQWAVNSSI) traverse the membrane as a helical segment. Residues 1152-1480 (DVDSLMRSVS…TEEEVQETRL (329 aa)) lie on the Cytoplasmic side of the membrane. One can recognise an ABC transporter 2 domain in the interval 1210–1443 (MTIKDLTAKY…KSLFQQAISH (234 aa)). Residues tyrosine 1219 and 1244–1251 (GRTGSGKS) each bind ATP. Positions 1386–1480 (RALKQAFADC…TEEEVQETRL (95 aa)) are interaction with GORASP2. Residue cysteine 1395 is the site of S-palmitoyl cysteine attachment. A phosphoserine mark is found at serine 1444 and serine 1456. The segment at 1452-1480 (HRNSSKYKSRPQIASLKEETEEEVQETRL) is disordered. Residues 1470-1480 (ETEEEVQETRL) are compositionally biased toward acidic residues. The PDZ-binding signature appears at 1478–1480 (TRL).

This sequence belongs to the ABC transporter superfamily. ABCC family. CFTR transporter (TC 3.A.1.202) subfamily. In terms of assembly, monomer; does not require oligomerization for channel activity. May form oligomers in the membrane. Interacts with SLC26A3, SLC26A6 and NHERF1. Interacts with SHANK2. Interacts with MYO6. Interacts (via C-terminus) with GOPC (via PDZ domain); this promotes CFTR internalization and thereby decreases channel activity. Interacts with SLC4A7 through NHERF1. Found in a complex with MYO5B and RAB11A. Interacts with ANO1. Interacts with SLC26A8. Interacts with AHCYL1; the interaction increases CFTR activity. Interacts with CSE1L. The core-glycosylated form interacts with GORASP2 (via PDZ GRASP-type 1 domain) in respone to ER stress. Interacts with MARCHF2; the interaction leads to CFTR ubiqtuitination and degradation. Interacts with ADGRG2. N-glycosylated. Post-translationally, phosphorylated; cAMP treatment promotes phosphorylation and activates the channel. Dephosphorylation decreases the ATPase activity (in vitro). Phosphorylation at PKA sites activates the channel. Phosphorylation at PKC sites enhances the response to phosphorylation by PKA. Phosphorylated by AMPK; this inhibits channel activity. In terms of processing, ubiquitinated, leading to its degradation in the lysosome. Deubiquitination by USP10 in early endosomes enhances its endocytic recycling to the cell membrane. Ubiquitinated by RNF185 during ER stress. Ubiquitinated by MARCHF2.

Its subcellular location is the apical cell membrane. The protein resides in the early endosome membrane. It localises to the cell membrane. The protein localises to the recycling endosome membrane. It is found in the endoplasmic reticulum membrane. Its subcellular location is the nucleus. The catalysed reaction is ATP + H2O + closed Cl(-) channel = ADP + phosphate + open Cl(-) channel.. It catalyses the reaction chloride(in) = chloride(out). The enzyme catalyses hydrogencarbonate(in) = hydrogencarbonate(out). It carries out the reaction ATP + H2O = ADP + phosphate + H(+). Epithelial ion channel that plays an important role in the regulation of epithelial ion and water transport and fluid homeostasis. Mediates the transport of chloride ions across the cell membrane. Possesses an intrinsic ATPase activity and utilizes ATP to gate its channel; the passive flow of anions through the channel is gated by cycles of ATP binding and hydrolysis by the ATP-binding domains. The ion channel is also permeable to HCO(3)(-); selectivity depends on the extracellular chloride concentration. Exerts its function also by modulating the activity of other ion channels and transporters. Contributes to the regulation of the pH and the ion content of the epithelial fluid layer. Modulates the activity of the epithelial sodium channel (ENaC) complex, in part by regulating the cell surface expression of the ENaC complex. May regulate bicarbonate secretion and salvage in epithelial cells by regulating the transporter SLC4A7. Can inhibit the chloride channel activity of ANO1. Plays a role in the chloride and bicarbonate homeostasis during sperm epididymal maturation and capacitation. This Plecturocebus moloch (Dusky titi monkey) protein is Cystic fibrosis transmembrane conductance regulator.